The following is a 359-amino-acid chain: Transaldolase (359 aa).

The active-site Schiff-base intermediate with substrate is lysine 139.

This sequence belongs to the transaldolase family. Type 2 subfamily.

The protein localises to the cytoplasm. The catalysed reaction is D-sedoheptulose 7-phosphate + D-glyceraldehyde 3-phosphate = D-erythrose 4-phosphate + beta-D-fructose 6-phosphate. Its pathway is carbohydrate degradation; pentose phosphate pathway; D-glyceraldehyde 3-phosphate and beta-D-fructose 6-phosphate from D-ribose 5-phosphate and D-xylulose 5-phosphate (non-oxidative stage): step 2/3. Transaldolase is important for the balance of metabolites in the pentose-phosphate pathway. In Thiobacillus denitrificans (strain ATCC 25259 / T1), this protein is Transaldolase.